A 49-amino-acid chain; its full sequence is MTINLFFLTLTIKKRFKSLEEFEREQQIEQIYDEMKESQLKHLYLTNWR.

This is an uncharacterized protein from Bacillus subtilis (strain 168).